The primary structure comprises 255 residues: MLLPAANVIMQLAVPGVGYGVLESPVDSGNVYKHPFKRARTTGTYLAVATIGTESDRALIRGAVDVAHRQVRSTASSPVSYNAFDPKLQLWVAACLYRYFVDQHEFLYGPLEDATADAVYQDAKRLGTTLQVPEGMWPPDRVAFDEYWKRSLDGLQIDAPVREHLRGVASVAFLPWPLRAVAGPFNLFATTGFLAPEFRAMMQLEWSQAQQRRFEWLLSVLRLADRLIPHRAWIFVYQLYLWDMRFRARHGRRIV.

A run of 2 helical transmembrane segments spans residues 2–22 (LLPAANVIMQLAVPGVGYGVL) and 168–188 (VASVAFLPWPLRAVAGPFNLF).

The protein localises to the cell membrane. This is an uncharacterized protein from Mycobacterium tuberculosis (strain ATCC 25618 / H37Rv).